A 201-amino-acid polypeptide reads, in one-letter code: Putative Ras-related protein Rab-1C (201 aa).

GTP is bound by residues 15–23 (GDSGVGKSC), 33–40 (YTESYIST), and 63–67 (DTAGQ). The Effector region motif lies at 37 to 45 (YISTIGVDF). Position 76 is a (Microbial infection) O-(2-cholinephosphoryl)serine (serine 76). Residues 121–124 (NKSD) and 151–153 (SAK) contribute to the GTP site. The interval 174-201 (GPGAASGGERPNLKIDSTPVKPAGGGCC) is disordered. 2 S-geranylgeranyl cysteine lipidation sites follow: cysteine 200 and cysteine 201.

Belongs to the small GTPase superfamily. Rab family. In terms of processing, (Microbial infection) Phosphocholinated at Ser-76 by L.pneumophila AnkX, leading to displace GDP dissociation inhibitors (GDI). Both GDP-bound and GTP-bound forms can be phosphocholinated. Dephosphocholinated by L.pneumophila Lem3, restoring accessibility to L.pneumophila GTPase effector LepB. (Microbial infection) Glycosylated by S.typhimurium protein Ssek3: arginine GlcNAcylation prevents GTPase activity, thereby disrupting vesicular protein transport from the endoplasmic reticulum (ER) to the Golgi compartment.

The protein localises to the membrane. It localises to the cytoplasm. The catalysed reaction is GTP + H2O = GDP + phosphate + H(+). Its function is as follows. Protein transport. Probably involved in vesicular traffic. This Homo sapiens (Human) protein is Putative Ras-related protein Rab-1C (RAB1C).